A 95-amino-acid polypeptide reads, in one-letter code: IgNAR transmembrane form NE (95 aa).

The 36-residue stretch at 1 to 36 (LTFSTRSLLNLPAVEWKSGAKYTCTASHSPSQSTVK) folds into the Ig-like domain. Residues 24 to 35 (CTASHSPSQSTV) are compositionally biased toward polar residues. The disordered stretch occupies residues 24 to 79 (CTASHSPSQSTVKRVIRNPKESPKGSSETRKSPLEIMESPEDYGTEEDQLENVNED). The span at 41–56 (NPKESPKGSSETRKSP) shows a compositional bias: basic and acidic residues. Residues 61 to 77 (ESPEDYGTEEDQLENVN) show a composition bias toward acidic residues. N-linked (GlcNAc...) asparagine glycosylation occurs at Asn-81.

In terms of tissue distribution, expressed mainly in lymphoid tissues including spleen, epigonal organ and circulating lymphocytes. Also expressed at low levels in the pancreas.

This Ginglymostoma cirratum (Nurse shark) protein is IgNAR transmembrane form NE.